The chain runs to 309 residues: Ribosomal protein L11 methyltransferase (309 aa).

Threonine 160, glycine 181, aspartate 203, and asparagine 245 together coordinate S-adenosyl-L-methionine.

It belongs to the methyltransferase superfamily. PrmA family.

It localises to the cytoplasm. It carries out the reaction L-lysyl-[protein] + 3 S-adenosyl-L-methionine = N(6),N(6),N(6)-trimethyl-L-lysyl-[protein] + 3 S-adenosyl-L-homocysteine + 3 H(+). Functionally, methylates ribosomal protein L11. This is Ribosomal protein L11 methyltransferase from Caldanaerobacter subterraneus subsp. tengcongensis (strain DSM 15242 / JCM 11007 / NBRC 100824 / MB4) (Thermoanaerobacter tengcongensis).